We begin with the raw amino-acid sequence, 192 residues long: MSERVFAELATIHYQKSLPCRHSFDPPRTTPILHLYIIHLLLPPLIAIVCLCYIAIVPFEEEEERMRMQVVETAAVEEEEAAAAMMSVYERVARMASGNAVVVFSASGCCMCHVVKRLLLGLGVGPAVYELDQLAAAADIQAALSQLLPPGQPPVPVVFVGGRLLGGVEKVMACHINGTLVPLLKQAGALWL.

One can recognise a Glutaredoxin domain in the interval 89 to 191; the sequence is YERVARMASG…PLLKQAGALW (103 aa). Cysteines 109 and 112 form a disulfide. Positions 189 to 192 match the Responsive for interaction with TGA factors motif; sequence ALWL.

It belongs to the glutaredoxin family. CC-type subfamily.

It is found in the cytoplasm. It localises to the nucleus. In terms of biological role, has a glutathione-disulfide oxidoreductase activity in the presence of NADPH and glutathione reductase. Reduces low molecular weight disulfides and proteins. This Oryza sativa subsp. japonica (Rice) protein is Glutaredoxin-C9 (GRXC9).